The following is a 312-amino-acid chain: Homoserine kinase (312 aa).

P91–C101 is an ATP binding site.

Belongs to the GHMP kinase family. Homoserine kinase subfamily.

The protein localises to the cytoplasm. The catalysed reaction is L-homoserine + ATP = O-phospho-L-homoserine + ADP + H(+). Its pathway is amino-acid biosynthesis; L-threonine biosynthesis; L-threonine from L-aspartate: step 4/5. Its function is as follows. Catalyzes the ATP-dependent phosphorylation of L-homoserine to L-homoserine phosphate. This is Homoserine kinase from Blochmanniella pennsylvanica (strain BPEN).